The chain runs to 214 residues: MIEHPGFVLWFTGLSGAGKTTIAVALENQLRARGIRIERLDGDTVRQSLTKDLGFSKEDRDKNIERVTFVAKLLSRNNVAVLSSFISPYAATRDHVRGETTNFIEVFVDAPLETCIERDVKGMYKKAIAGEIPNFTGISDPYEAPANPDIHVKTHEQTLEESVQTIIRRSSHGWNRTNTFPLKSRPNPPHRHKSKSSRAGEPFISPVFVLSIIA.

13-20 is a binding site for ATP; that stretch reads GLSGAGKT. The Phosphoserine intermediate role is filled by Ser-87. A disordered region spans residues 174–199; that stretch reads WNRTNTFPLKSRPNPPHRHKSKSSRA.

This sequence belongs to the APS kinase family.

The enzyme catalyses adenosine 5'-phosphosulfate + ATP = 3'-phosphoadenylyl sulfate + ADP + H(+). It functions in the pathway sulfur metabolism; hydrogen sulfide biosynthesis; sulfite from sulfate: step 2/3. Catalyzes the synthesis of activated sulfate. This chain is Probable adenylyl-sulfate kinase, found in Pseudomonas aeruginosa.